Here is a 1106-residue protein sequence, read N- to C-terminus: Protein kinase C (1106 aa).

In terms of domain architecture, REM-1 1 spans 1 to 67 (MDGDDLIASV…MRELQLRQMK (67 aa)). The interval 65–138 (QMKQEGASPT…PRPFAPVPKA (74 aa)) is disordered. Residues 79-93 (PPNPDGSAPVPPPKD) show a composition bias toward pro residues. Positions 149–226 (KYDTPYLGPK…LKRYEDLHVD (78 aa)) constitute an REM-1 2 domain. One can recognise a C2 domain in the interval 232–350 (APDDESLSTP…MRRKKIESEF (119 aa)). Residues 361 to 370 (MEHGAAHGRQ) show a composition bias toward basic and acidic residues. Residues 361-400 (MEHGAAHGRQDAGGAPGSSNRPPSGGHSGGPGQGYAGGAP) form a disordered region. The span at 386 to 400 (GHSGGPGQGYAGGAP) shows a compositional bias: gly residues. 2 consecutive Phorbol-ester/DAG-type zinc fingers follow at residues 460–508 (GHKF…VTKC) and 528–578 (PHRF…PDFC). Polar residues-rich tracts occupy residues 600-609 (KSASVSSGLS) and 658-668 (YIPPQSPTAAQ). Disordered stretches follow at residues 600–625 (KSAS…PQDN) and 658–719 (YIPP…HAHY). Residues 683–693 (AAAAAAAAAAA) are compositionally biased toward low complexity. The Protein kinase domain occupies 781–1040 (FNFLAVLGKG…AQEVMSHAFF (260 aa)). ATP contacts are provided by residues 787 to 795 (LGKGNFGKV) and K810. The Proton acceptor role is filled by D906. An AGC-kinase C-terminal domain is found at 1041–1106 (RNINWDDIYH…RGFSYTADFA (66 aa)). A Phosphothreonine modification is found at T1082. A Phosphoserine modification is found at S1100. Y1101 carries the post-translational modification Phosphotyrosine.

This sequence belongs to the protein kinase superfamily. AGC Ser/Thr protein kinase family. PKC subfamily. As to quaternary structure, interacts with hsp90.

The enzyme catalyses L-seryl-[protein] + ATP = O-phospho-L-seryl-[protein] + ADP + H(+). It catalyses the reaction L-threonyl-[protein] + ATP = O-phospho-L-threonyl-[protein] + ADP + H(+). Protein kinase C; part of cell wall integrity (CWI) signaling pathway composed of pkcA, the bck1-mkk2-mpka MAPK cascade and the downstream rlmA transcription regulator. The CWI signaling pathway regulates cell wall integrity and pyomelanin formation. CWI also controls oxidative stress response, gliotoxin production, iron adaptation and asexual development. Finally, CWI is constitutively required for A.fumigatus to cope with the temperature increase found in the mammalian lung environment, during infection. Modulates the expression of fumiquinazoline cluster during conidiogenesis. The sequence is that of Protein kinase C from Aspergillus fumigatus (strain ATCC MYA-4609 / CBS 101355 / FGSC A1100 / Af293) (Neosartorya fumigata).